The sequence spans 296 residues: NADH-cytochrome b5 reductase 2 (296 aa).

A helical transmembrane segment spans residues 2–24 (LVALAAIGVTVLLFLIKALGSGA). The 113-residue stretch at 35-147 (NAKYPLPLIE…RGPNGLLVYK (113 aa)) folds into the FAD-binding FR-type domain. Residues 127 to 142 (DSLK…GPNG) and 166 to 201 (VAKH…KCYL) contribute to the FAD site.

The protein belongs to the flavoprotein pyridine nucleotide cytochrome reductase family. FAD is required as a cofactor.

The protein resides in the membrane. It carries out the reaction 2 Fe(III)-[cytochrome b5] + NADH = 2 Fe(II)-[cytochrome b5] + NAD(+) + H(+). In terms of biological role, NADH-cytochrome b5 reductases are involved in desaturation and elongation of fatty acids, cholesterol biosynthesis and drug metabolism. This is NADH-cytochrome b5 reductase 2 (cyb5r2) from Xenopus laevis (African clawed frog).